The sequence spans 178 residues: Large ribosomal subunit protein uL5 (178 aa).

N-acetylalanine is present on Ala2. Lys38 participates in a covalent cross-link: Glycyl lysine isopeptide (Lys-Gly) (interchain with G-Cter in SUMO2). Phosphothreonine occurs at positions 44 and 47. The residue at position 52 (Lys52) is an N6-acetyllysine; alternate. Residue Lys52 forms a Glycyl lysine isopeptide (Lys-Gly) (interchain with G-Cter in SUMO2); alternate linkage. At Lys85 the chain carries N6-acetyllysine. A Glycyl lysine isopeptide (Lys-Gly) (interchain with G-Cter in SUMO2) cross-link involves residue Lys154.

This sequence belongs to the universal ribosomal protein uL5 family. In terms of assembly, component of the large ribosomal subunit (LSU). Part of the 5S RNP complex, which is a LSU subcomplex composed of the 5S RNA, RPL5 and RPL11. Component of a hexameric 5S RNP precursor complex, composed of 5S RNA, RRS1, RPF2/BXDC1, RPL5, RPL11 and HEATR3; this complex acts as a precursor for ribosome assembly. Interacts with PML. Interacts with MDM2 (via its RanBP2-type zinc finger domain); negatively regulates MDM2-mediated TP53 ubiquitination and degradation. Interacts with NOP53; retains RPL11 into the nucleolus.

It localises to the nucleus. The protein localises to the nucleolus. The protein resides in the cytoplasm. Functionally, component of the ribosome, a large ribonucleoprotein complex responsible for the synthesis of proteins in the cell. The small ribosomal subunit (SSU) binds messenger RNAs (mRNAs) and translates the encoded message by selecting cognate aminoacyl-transfer RNA (tRNA) molecules. The large subunit (LSU) contains the ribosomal catalytic site termed the peptidyl transferase center (PTC), which catalyzes the formation of peptide bonds, thereby polymerizing the amino acids delivered by tRNAs into a polypeptide chain. The nascent polypeptides leave the ribosome through a tunnel in the LSU and interact with protein factors that function in enzymatic processing, targeting, and the membrane insertion of nascent chains at the exit of the ribosomal tunnel. As part of the 5S RNP/5S ribonucleoprotein particle it is an essential component of the LSU, required for its formation and the maturation of rRNAs. It also couples ribosome biogenesis to p53/TP53 activation. As part of the 5S RNP it accumulates in the nucleoplasm and inhibits MDM2, when ribosome biogenesis is perturbed, mediating the stabilization and the activation of TP53. Promotes nucleolar location of PML. This is Large ribosomal subunit protein uL5 (RPL11) from Oryctolagus cuniculus (Rabbit).